The following is a 75-amino-acid chain: Xibalbin-13 2 (75 aa).

The signal sequence occupies residues Met1–Ala27. Positions Glu28–Asp30 are excised as a propeptide. Cystine bridges form between Cys34–Cys49, Cys41–Cys54, Cys48–Cys65, and Cys56–Cys63.

It belongs to the xibalbin-13 family. As to expression, expressed by the venom gland and the whole body.

The protein localises to the secreted. In terms of biological role, probable neurotoxin. Strongly inhibits voltage-gated potassium channels (Kv1.1/KCNA1, Kv1.2/KCNA2, Kv1.3/KCNA3, and Kv1.6/KCNA6, with the highest toxicity against Kv1.1 (85.1% inhibition at 1 uM)) and mildly inhibits sodium channels (Nav1.2/SCN2A, Nav1.4/SCN4A, Nav1.5/SCN5A, Nav1.6/SCN8A, and BgNav). Induces activation of protein kinase A type II (PKA-II) and MAP kinase Erk1/2 in primary nociceptive and non-nociceptive sensory neurons. Does not show cytotoxic activity. Does not have an impact on Ca2+, cAMP, and NO signaling in the cell types analyzed. Does not interfere with the adhesion of leukocytes to endothelial cells. This Xibalbanus tulumensis (Blind cave remipede) protein is Xibalbin-13 2.